We begin with the raw amino-acid sequence, 416 residues long: Lipase (416 aa).

The N-terminal stretch at 1–28 is a signal peptide; the sequence is MKCCRIMFVLLGLWFVFGLSVPGGRTEA. Residue serine 141 is the Nucleophile of the active site. Glycine 314 is a Ca(2+) binding site. Aspartate 345 (charge relay system) is an active-site residue. Aspartate 385 contributes to the Ca(2+) binding site. The active-site Charge relay system is histidine 386. Residues glutamate 388, aspartate 393, and proline 394 each coordinate Ca(2+).

It belongs to the AB hydrolase superfamily. Homodimer.

The protein resides in the secreted. The catalysed reaction is a triacylglycerol + H2O = a diacylglycerol + a fatty acid + H(+). Its activity is regulated as follows. Activity is inhibited by zinc and iron ions, and activated in vitro in 25% v/v DMSO and acetone. Triacylglycerol hydrolase that shows hydrolysis preference towards some of the natural oils such as olive, sunflower and corn oils. The polypeptide is Lipase (Bacillus sp).